The following is a 182-amino-acid chain: Adenine phosphoribosyltransferase (182 aa).

The protein belongs to the purine/pyrimidine phosphoribosyltransferase family. In terms of assembly, homodimer.

It localises to the cytoplasm. The enzyme catalyses AMP + diphosphate = 5-phospho-alpha-D-ribose 1-diphosphate + adenine. It participates in purine metabolism; AMP biosynthesis via salvage pathway; AMP from adenine: step 1/1. Catalyzes a salvage reaction resulting in the formation of AMP, that is energically less costly than de novo synthesis. The sequence is that of Adenine phosphoribosyltransferase from Pseudomonas entomophila (strain L48).